Reading from the N-terminus, the 366-residue chain is Chorismate synthase (366 aa).

Residues Arg48 and Arg54 each coordinate NADP(+). Residues 132–134, 244–245, Gly289, 304–308, and Arg330 contribute to the FMN site; these read RSS, NA, and KPTSS.

This sequence belongs to the chorismate synthase family. In terms of assembly, homotetramer. FMNH2 serves as cofactor.

The enzyme catalyses 5-O-(1-carboxyvinyl)-3-phosphoshikimate = chorismate + phosphate. It participates in metabolic intermediate biosynthesis; chorismate biosynthesis; chorismate from D-erythrose 4-phosphate and phosphoenolpyruvate: step 7/7. Functionally, catalyzes the anti-1,4-elimination of the C-3 phosphate and the C-6 proR hydrogen from 5-enolpyruvylshikimate-3-phosphate (EPSP) to yield chorismate, which is the branch point compound that serves as the starting substrate for the three terminal pathways of aromatic amino acid biosynthesis. This reaction introduces a second double bond into the aromatic ring system. The sequence is that of Chorismate synthase from Methylobacterium radiotolerans (strain ATCC 27329 / DSM 1819 / JCM 2831 / NBRC 15690 / NCIMB 10815 / 0-1).